Here is a 287-residue protein sequence, read N- to C-terminus: Nucleotide-binding protein Ppro_0977 (287 aa).

8 to 15 (GMSGSGKS) is an ATP binding site. GTP is bound at residue 59 to 62 (DIRG).

This sequence belongs to the RapZ-like family.

Displays ATPase and GTPase activities. This chain is Nucleotide-binding protein Ppro_0977, found in Pelobacter propionicus (strain DSM 2379 / NBRC 103807 / OttBd1).